We begin with the raw amino-acid sequence, 122 residues long: Basic phospholipase A2 homolog myotoxin II (122 aa).

7 cysteine pairs are disulfide-bonded: cysteine 26–cysteine 116, cysteine 28–cysteine 44, cysteine 43–cysteine 95, cysteine 49–cysteine 122, cysteine 50–cysteine 88, cysteine 57–cysteine 81, and cysteine 75–cysteine 86. The interval 105 to 118 (KKYRYNYLKPFCKK) is important for membrane-damaging activities in eukaryotes and bacteria; heparin-binding.

The protein belongs to the phospholipase A2 family. Group II subfamily. K49 sub-subfamily. Homodimer; non-covalently linked (probable alternative/compact dimer conformation). In terms of tissue distribution, expressed by the venom gland.

It is found in the secreted. Its activity is regulated as follows. Myotoxic activity is inhibited by suramin and rosmarinic acid. Cytotoxic and myotoxic activities are inhibited by pre-incubation with varespladib. Suramin inhibits this myotoxin by (i) direct blockage of the MDoS and MDiS, preventing the toxin/membrane interaction and disruption and (ii) formation of an oligomeric complex, resulting in a tetrameric configuration for which both MDoS and MDiS becomes physically inaccessible, thus avoiding any possibility of toxin-membrane interaction or disruption. Heparin completely inhibits the cytotoxic and bactericidal activities, but only partially the myotoxic, edema-inducing and lethal effects. Functionally, snake venom phospholipase A2 (PLA2) homolog that lacks enzymatic activity. Shows high myotoxin activities. Also shows neurotoxicity, since it induces muscle paralysis when tested on mouse phrenic-diaphragm preparations. Displays edema-inducing activities. Also displays antimicrobial activity against E.coli and C.albicans, as well as antitumoral activity against some human and mice cell lines. In addition, it is effective as parasiticidal agent against Leishmania sp. and S.mansoni. It also disrupts negatively charged liposomes in a dose- and temperature-dependent manner and shows toxicity by intraperitoneal route. In contrast to other phospholipase A2-like toxins, this myotoxin does not require fatty acid binding to be active. This chain is Basic phospholipase A2 homolog myotoxin II, found in Bothrops moojeni (Lance-headed viper).